We begin with the raw amino-acid sequence, 240 residues long: EF-hand domain-containing protein D2 (240 aa).

N-acetylalanine is present on Ala-2. At Ser-11 the chain carries Phosphoserine. The disordered stretch occupies residues 13–38 (RLQMEGEGGGETPEQPGLNGAAAAAA). Phosphoserine is present on residues Ser-74 and Ser-76. Residue Tyr-83 is modified to Phosphotyrosine. 2 consecutive EF-hand domains span residues 92-127 (KQIK…LGAP) and 128-163 (QTHL…AAAG). Residues Asp-105, Asp-109, Glu-116, Asp-141, Asp-143, Asp-145, Lys-147, and Glu-152 each contribute to the Ca(2+) site. Lys-233 bears the N6-acetyllysine mark.

In terms of assembly, interacts with CASP9; with inactive form. As to expression, found in lymphocytes; preferentially expressed in CD8+ cells.

It is found in the membrane raft. In terms of biological role, may regulate B-cell receptor (BCR)-induced immature and primary B-cell apoptosis. Plays a role as negative regulator of the canonical NF-kappa-B-activating branch. Controls spontaneous apoptosis through the regulation of BCL2L1 abundance. The chain is EF-hand domain-containing protein D2 (EFHD2) from Homo sapiens (Human).